Reading from the N-terminus, the 200-residue chain is Holliday junction branch migration complex subunit RuvA (200 aa).

Residues 1-65 are domain I; it reads MYEYIKGTLT…ETEHVLYGFS (65 aa). Residues 66 to 144 form a domain II region; the sequence is SRAERECFRL…TLMPLYLEEP (79 aa). Positions 145 to 149 are flexible linker; that stretch reads VVPSS. The interval 150–200 is domain III; it reads TANSSFKEGIGALMNLGFSRLAADRMMTEAVKELSEEASVAELLPIALRKS.

The protein belongs to the RuvA family. As to quaternary structure, homotetramer. Forms an RuvA(8)-RuvB(12)-Holliday junction (HJ) complex. HJ DNA is sandwiched between 2 RuvA tetramers; dsDNA enters through RuvA and exits via RuvB. An RuvB hexamer assembles on each DNA strand where it exits the tetramer. Each RuvB hexamer is contacted by two RuvA subunits (via domain III) on 2 adjacent RuvB subunits; this complex drives branch migration. In the full resolvosome a probable DNA-RuvA(4)-RuvB(12)-RuvC(2) complex forms which resolves the HJ.

The protein resides in the cytoplasm. Functionally, the RuvA-RuvB-RuvC complex processes Holliday junction (HJ) DNA during genetic recombination and DNA repair, while the RuvA-RuvB complex plays an important role in the rescue of blocked DNA replication forks via replication fork reversal (RFR). RuvA specifically binds to HJ cruciform DNA, conferring on it an open structure. The RuvB hexamer acts as an ATP-dependent pump, pulling dsDNA into and through the RuvAB complex. HJ branch migration allows RuvC to scan DNA until it finds its consensus sequence, where it cleaves and resolves the cruciform DNA. The chain is Holliday junction branch migration complex subunit RuvA from Chlamydia trachomatis serovar L2 (strain ATCC VR-902B / DSM 19102 / 434/Bu).